Here is a 383-residue protein sequence, read N- to C-terminus: ATP phosphoribosyltransferase regulatory subunit (383 aa).

It belongs to the class-II aminoacyl-tRNA synthetase family. HisZ subfamily. As to quaternary structure, heteromultimer composed of HisG and HisZ subunits.

The protein resides in the cytoplasm. It participates in amino-acid biosynthesis; L-histidine biosynthesis; L-histidine from 5-phospho-alpha-D-ribose 1-diphosphate: step 1/9. Its function is as follows. Required for the first step of histidine biosynthesis. May allow the feedback regulation of ATP phosphoribosyltransferase activity by histidine. This is ATP phosphoribosyltransferase regulatory subunit from Desulfitobacterium hafniense (strain DSM 10664 / DCB-2).